The sequence spans 845 residues: Protein P (845 aa).

The terminal protein domain (TP) stretch occupies residues 1–179 (MPLSYQHFLK…FCGSPYSWEQ (179 aa)). The interval 180-348 (ELHHGRLVTK…YCLSHLVNLL (169 aa)) is spacer. Disordered stretches follow at residues 188 to 211 (TKTS…SRSS) and 288 to 317 (YSHL…ARSQ). Polar residues-rich tracts occupy residues 199–211 (VCSQ…SRSS) and 290–301 (HLSTSKRQSSSG). The segment at 349 to 692 (EDWGPCTDHG…YMNLYPVARQ (344 aa)) is polymerase/reverse transcriptase domain (RT). A Reverse transcriptase domain is found at 359-602 (EHHIRIPRTP…YSLNFMGYII (244 aa)). Mg(2+) contacts are provided by Asp-431, Asp-553, and Asp-554.

The protein belongs to the hepadnaviridae P protein family.

It carries out the reaction DNA(n) + a 2'-deoxyribonucleoside 5'-triphosphate = DNA(n+1) + diphosphate. It catalyses the reaction Endonucleolytic cleavage to 5'-phosphomonoester.. Activated by host HSP70 and HSP40 in vitro to be able to bind the epsilon loop of the pgRNA. Because deletion of the RNase H region renders the protein partly chaperone-independent, the chaperones may be needed indirectly to relieve occlusion of the RNA-binding site by this domain. Inhibited by several reverse-transcriptase inhibitors: Lamivudine, Adefovir and Entecavir. Multifunctional enzyme that converts the viral RNA genome into dsDNA in viral cytoplasmic capsids. This enzyme displays a DNA polymerase activity that can copy either DNA or RNA templates, and a ribonuclease H (RNase H) activity that cleaves the RNA strand of RNA-DNA heteroduplexes in a partially processive 3'- to 5'-endonucleasic mode. Neo-synthesized pregenomic RNA (pgRNA) are encapsidated together with the P protein, and reverse-transcribed inside the nucleocapsid. Initiation of reverse-transcription occurs first by binding the epsilon loop on the pgRNA genome, and is initiated by protein priming, thereby the 5'-end of (-)DNA is covalently linked to P protein. Partial (+)DNA is synthesized from the (-)DNA template and generates the relaxed circular DNA (RC-DNA) genome. After budding and infection, the RC-DNA migrates in the nucleus, and is converted into a plasmid-like covalently closed circular DNA (cccDNA). The activity of P protein does not seem to be necessary for cccDNA generation, and is presumably released from (+)DNA by host nuclear DNA repair machinery. This chain is Protein P, found in Homo sapiens (Human).